We begin with the raw amino-acid sequence, 160 residues long: MPSFDIVSEIDNQEVRNAVENAQRELETRFDFRGVEASFEWTSKETTLSAEADFQLQQMLDILRNKLIKRNVDPDTMEVGDPEHSGKTFSQKITFLEGIDAPTAKKLVKLIKDSKLKVQASIQGDQVRVTGKKRDDLQAVMALVREGKLGQPFQFNNFRD.

This sequence belongs to the YajQ family.

Its function is as follows. Nucleotide-binding protein. This is Nucleotide-binding protein TERTU_3542 from Teredinibacter turnerae (strain ATCC 39867 / T7901).